Reading from the N-terminus, the 257-residue chain is Pyridoxine 5'-phosphate synthase (257 aa).

3-amino-2-oxopropyl phosphate is bound at residue N6. Residue D8–H9 participates in 1-deoxy-D-xylulose 5-phosphate binding. R17 contacts 3-amino-2-oxopropyl phosphate. Residue H42 is the Proton acceptor of the active site. Residues R44 and H49 each contribute to the 1-deoxy-D-xylulose 5-phosphate site. The active-site Proton acceptor is E69. T99 contributes to the 1-deoxy-D-xylulose 5-phosphate binding site. The active-site Proton donor is the H211. 3-amino-2-oxopropyl phosphate is bound by residues G212 and G233–Q234.

Belongs to the PNP synthase family. Homooctamer; tetramer of dimers.

Its subcellular location is the cytoplasm. The enzyme catalyses 3-amino-2-oxopropyl phosphate + 1-deoxy-D-xylulose 5-phosphate = pyridoxine 5'-phosphate + phosphate + 2 H2O + H(+). The protein operates within cofactor biosynthesis; pyridoxine 5'-phosphate biosynthesis; pyridoxine 5'-phosphate from D-erythrose 4-phosphate: step 5/5. Catalyzes the complicated ring closure reaction between the two acyclic compounds 1-deoxy-D-xylulose-5-phosphate (DXP) and 3-amino-2-oxopropyl phosphate (1-amino-acetone-3-phosphate or AAP) to form pyridoxine 5'-phosphate (PNP) and inorganic phosphate. The polypeptide is Pyridoxine 5'-phosphate synthase (Campylobacter hominis (strain ATCC BAA-381 / DSM 21671 / CCUG 45161 / LMG 19568 / NCTC 13146 / CH001A)).